A 396-amino-acid chain; its full sequence is Ornithine aminotransferase (396 aa).

N6-(pyridoxal phosphate)lysine is present on Lys255.

It belongs to the class-III pyridoxal-phosphate-dependent aminotransferase family. OAT subfamily. Requires pyridoxal 5'-phosphate as cofactor.

It localises to the cytoplasm. It carries out the reaction a 2-oxocarboxylate + L-ornithine = L-glutamate 5-semialdehyde + an L-alpha-amino acid. It functions in the pathway amino-acid biosynthesis; L-proline biosynthesis; L-glutamate 5-semialdehyde from L-ornithine: step 1/1. Its function is as follows. Catalyzes the interconversion of ornithine to glutamate semialdehyde. This chain is Ornithine aminotransferase, found in Staphylococcus carnosus (strain TM300).